Reading from the N-terminus, the 615-residue chain is Sterol 3-beta-glucosyltransferase UGT80B1 (615 aa).

The disordered stretch occupies residues 1 to 54; sequence MASNVFDHPLQELEGEDNGVKSEKASLLETSGSVDTTPEDSGHRSSDGHRGLDH. A compositionally biased stretch (basic and acidic residues) spans 40 to 54; sequence DSGHRSSDGHRGLDH.

It belongs to the glycosyltransferase 28 family. As to expression, expressed in developing seeds, seedlings, leaves and around the apical tip of cotyledons. In embryo, expressed in the seed coat and cotyledons.

The enzyme catalyses a sterol + UDP-alpha-D-glucose = a sterol 3-beta-D-glucoside + UDP + H(+). In terms of biological role, involved in the biosynthesis of sterol glucosides. Catalyzes the synthesis of steryl glycosides (SGs) and acyl steryl glycosides (ASGs) which are the most abundant sterol derivatives in higher plants. Can act on several sterols like sitosterol, campesterol and stigmasterol. Is required for embryonic development, seed suberin accumulation, cutin formation and flavanoid accumulation in the seed coat. Both UGT80A2 and UGT80B1 are required for the normal production of SGs and ASGs in seeds. The sequence is that of Sterol 3-beta-glucosyltransferase UGT80B1 from Arabidopsis thaliana (Mouse-ear cress).